The chain runs to 216 residues: Thiamine-phosphate synthase (216 aa).

4-amino-2-methyl-5-(diphosphooxymethyl)pyrimidine contacts are provided by residues 39–43 (QLRRK) and N71. Mg(2+) contacts are provided by D72 and D91. S109 lines the 4-amino-2-methyl-5-(diphosphooxymethyl)pyrimidine pocket. A 2-[(2R,5Z)-2-carboxy-4-methylthiazol-5(2H)-ylidene]ethyl phosphate-binding site is contributed by 136–138 (SPT). K139 lines the 4-amino-2-methyl-5-(diphosphooxymethyl)pyrimidine pocket. 2-[(2R,5Z)-2-carboxy-4-methylthiazol-5(2H)-ylidene]ethyl phosphate contacts are provided by residues G172 and 192-193 (IT).

This sequence belongs to the thiamine-phosphate synthase family. The cofactor is Mg(2+).

It carries out the reaction 2-[(2R,5Z)-2-carboxy-4-methylthiazol-5(2H)-ylidene]ethyl phosphate + 4-amino-2-methyl-5-(diphosphooxymethyl)pyrimidine + 2 H(+) = thiamine phosphate + CO2 + diphosphate. The enzyme catalyses 2-(2-carboxy-4-methylthiazol-5-yl)ethyl phosphate + 4-amino-2-methyl-5-(diphosphooxymethyl)pyrimidine + 2 H(+) = thiamine phosphate + CO2 + diphosphate. It catalyses the reaction 4-methyl-5-(2-phosphooxyethyl)-thiazole + 4-amino-2-methyl-5-(diphosphooxymethyl)pyrimidine + H(+) = thiamine phosphate + diphosphate. It functions in the pathway cofactor biosynthesis; thiamine diphosphate biosynthesis; thiamine phosphate from 4-amino-2-methyl-5-diphosphomethylpyrimidine and 4-methyl-5-(2-phosphoethyl)-thiazole: step 1/1. Condenses 4-methyl-5-(beta-hydroxyethyl)thiazole monophosphate (THZ-P) and 2-methyl-4-amino-5-hydroxymethyl pyrimidine pyrophosphate (HMP-PP) to form thiamine monophosphate (TMP). This chain is Thiamine-phosphate synthase, found in Bordetella avium (strain 197N).